An 825-amino-acid polypeptide reads, in one-letter code: Zinc finger protein 229 (825 aa).

The disordered stretch occupies residues 1–26 (METLTSRHEKRALHSQASAISQDREE). Positions 34 to 108 (LSFKDVAVVF…SHKELSSCKI (75 aa)) constitute a KRAB domain. A C2H2-type 1; degenerate zinc finger spans residues 291 to 315 (KLCQYDEFSEGLRHSAHLNRHQRVP). 7 C2H2-type zinc fingers span residues 349–371 (YRCD…QGVH), 377–399 (YKCE…QRVH), 405–427 (YKCS…QRLH), 433–455 (YTCS…QHIH), 461–483 (YSCG…QKTH), 489–511 (YQCD…QRVH), and 517–539 (YKCN…QRLH). Lysine 543 is covalently cross-linked (Glycyl lysine isopeptide (Lys-Gly) (interchain with G-Cter in SUMO2)). 10 C2H2-type zinc fingers span residues 545-566 (YKCE…QRVH), 572-594 (YKCS…QRVH), 600-622 (YVCD…QRVH), 628-650 (YKCA…QRVH), 656-678 (YRCQ…QRVH), 684-706 (YTCD…QRLH), 712-734 (YTCC…KRVH), 740-762 (YRCH…QRVH), 768-790 (YKCE…QRVH), and 796-818 (YTCG…QRVH).

The protein belongs to the krueppel C2H2-type zinc-finger protein family.

It localises to the nucleus. May be involved in transcriptional regulation. The polypeptide is Zinc finger protein 229 (Homo sapiens (Human)).